A 150-amino-acid polypeptide reads, in one-letter code: Aspartate 1-decarboxylase 2 (150 aa).

Ser24 serves as the catalytic Schiff-base intermediate with substrate; via pyruvic acid. Ser24 bears the Pyruvic acid (Ser) mark. Thr56 serves as a coordination point for substrate. Catalysis depends on Tyr57, which acts as the Proton donor. Substrate is bound at residue 72–74 (GAA).

Belongs to the PanD family. Heterooctamer of four alpha and four beta subunits. Pyruvate is required as a cofactor. Is synthesized initially as an inactive proenzyme, which is activated by self-cleavage at a specific serine bond to produce a beta-subunit with a hydroxyl group at its C-terminus and an alpha-subunit with a pyruvoyl group at its N-terminus.

It localises to the cytoplasm. The catalysed reaction is L-aspartate + H(+) = beta-alanine + CO2. The protein operates within cofactor biosynthesis; (R)-pantothenate biosynthesis; beta-alanine from L-aspartate: step 1/1. Its function is as follows. Catalyzes the pyruvoyl-dependent decarboxylation of aspartate to produce beta-alanine. The polypeptide is Aspartate 1-decarboxylase 2 (Mesorhizobium japonicum (strain LMG 29417 / CECT 9101 / MAFF 303099) (Mesorhizobium loti (strain MAFF 303099))).